The chain runs to 718 residues: Polyribonucleotide nucleotidyltransferase (718 aa).

Residues D497 and D503 each coordinate Mg(2+). The KH domain maps to 564 to 623; it reads PRLLTMKIDPEQIGLVIGPGGKTIKGITEQTGSKIDIADDGTVTIAALEAEKAEKAKQII. Residues 633–701 enclose the S1 motif domain; it reads GEVYMGRVTR…AKGRLNLTRL (69 aa).

The protein belongs to the polyribonucleotide nucleotidyltransferase family. Mg(2+) is required as a cofactor.

It localises to the cytoplasm. The enzyme catalyses RNA(n+1) + phosphate = RNA(n) + a ribonucleoside 5'-diphosphate. Involved in mRNA degradation. Catalyzes the phosphorolysis of single-stranded polyribonucleotides processively in the 3'- to 5'-direction. In Rippkaea orientalis (strain PCC 8801 / RF-1) (Cyanothece sp. (strain PCC 8801)), this protein is Polyribonucleotide nucleotidyltransferase.